Consider the following 533-residue polypeptide: MSLVKKFITVGGATLGSRIFGFARETLMAAALGTGPMADVFYAAFRFPNLFRRLFAEGAFNAAFVPLFAKEIEANGIDGAKRFSEEVFGVLFSVLLLITIVMELAMPLLVRWVIAPGFADDAEKFDLTVRLAAVMFPYLMSMSLTAMMSGMLNSLHHFFAAAVAPIFLNLVMISALFYAIYFGADPLTTAWYLSWSVLVAGVLQLAVVYIGVRHAGISIGLRFPRFTPNVKRLLLLAIPAAITGGVTQINLVIGQAIASGKEGAIAALQYADRIYQLPLGVVGVAVGIVLLPELARSLKSGHIKEAANIQNRSIEFVLFLTLPAAVALWLLSDDIIRVLYERGAFNANNTTLVGSILAIFGLGLPAFVLIKALQPGFYAREDTKSPMRYTAIAVAVNSALSILLFPVLAERGIALAEAVAGWLNAVQLFVTLYRRGHLVWEWSLARRTAMLLVSSAVMGGVIVYLSHRWEPLLGSGSTLLTKTGVLGLLILIAMAVYFIVAFLIGGVDVGMIRRNLKRKRPAPASDAKAVNGE.

The next 13 helical transmembrane spans lie at 25–45 (ETLM…YAAF), 90–110 (VLFS…PLLV), 131–151 (LAAV…MSGM), 158–178 (FFAA…ALFY), 192–212 (YLSW…YIGV), 233–253 (LLLL…NLVI), 274–294 (IYQL…LPEL), 316–336 (FVLF…DDII), 350–370 (TTLV…FVLI), 389–409 (YTAI…PVLA), 412–432 (GIAL…FVTL), 449–469 (AMLL…SHRW), and 484–504 (GVLG…AFLI).

It belongs to the MurJ/MviN family.

The protein resides in the cell inner membrane. It participates in cell wall biogenesis; peptidoglycan biosynthesis. Functionally, involved in peptidoglycan biosynthesis. Transports lipid-linked peptidoglycan precursors from the inner to the outer leaflet of the cytoplasmic membrane. The protein is Probable lipid II flippase MurJ of Rhizobium tropici.